The primary structure comprises 141 residues: Putative lipoprotein Tanf_09445 (141 aa).

Positions 1–20 (MKQKIILWIGALLLLTAGTG) are cleaved as a signal peptide. A lipid anchor (N-palmitoyl cysteine) is attached at Cys21. Cys21 carries S-diacylglycerol cysteine lipidation.

Its subcellular location is the cell membrane. In Tannerella forsythia (strain ATCC 43037 / JCM 10827 / CCUG 21028 A / KCTC 5666 / FDC 338) (Bacteroides forsythus), this protein is Putative lipoprotein Tanf_09445.